We begin with the raw amino-acid sequence, 252 residues long: Gastrula zinc finger protein XlCGF28.1 (252 aa).

C2H2-type zinc fingers lie at residues 6-28 (FTCN…LRSH), 34-56 (FTCS…FRGH), 62-84 (SACT…IRSH), 90-112 (YTCT…VRSH), 118-140 (FKCT…LRFH), 146-168 (TTCS…FRVH), 174-196 (FTCT…SYLH), 202-224 (YTCT…SYLH), and 230-252 (FTCT…SHTH).

It belongs to the krueppel C2H2-type zinc-finger protein family.

The protein resides in the nucleus. Functionally, may be involved in transcriptional regulation. This Xenopus laevis (African clawed frog) protein is Gastrula zinc finger protein XlCGF28.1.